Consider the following 252-residue polypeptide: Ribosomal RNA small subunit methyltransferase J (252 aa).

Residues 101–102, 117–118, 153–154, and D171 contribute to the S-adenosyl-L-methionine site; these read RD, ER, and SS.

It belongs to the methyltransferase superfamily. RsmJ family.

It localises to the cytoplasm. It carries out the reaction guanosine(1516) in 16S rRNA + S-adenosyl-L-methionine = N(2)-methylguanosine(1516) in 16S rRNA + S-adenosyl-L-homocysteine + H(+). Specifically methylates the guanosine in position 1516 of 16S rRNA. The protein is Ribosomal RNA small subunit methyltransferase J of Salmonella heidelberg (strain SL476).